Consider the following 272-residue polypeptide: Glutamate racemase (272 aa).

Substrate-binding positions include 10 to 11 (DS) and 42 to 43 (YG). Cysteine 73 acts as the Proton donor/acceptor in catalysis. 74 to 75 (NT) lines the substrate pocket. The Proton donor/acceptor role is filled by cysteine 183. Substrate is bound at residue 184 to 185 (TH).

It belongs to the aspartate/glutamate racemases family.

It carries out the reaction L-glutamate = D-glutamate. It functions in the pathway cell wall biogenesis; peptidoglycan biosynthesis. In terms of biological role, provides the (R)-glutamate required for cell wall biosynthesis. The chain is Glutamate racemase from Leifsonia xyli subsp. xyli (strain CTCB07).